Consider the following 85-residue polypeptide: Granaticin polyketide synthase acyl carrier protein (85 aa).

Residues 3–81 (RLTLDGLRTI…VLLDLVNGAQ (79 aa)) form the Carrier domain. O-(pantetheine 4'-phosphoryl)serine is present on serine 41.

In terms of processing, 4'-phosphopantetheine is transferred from CoA to a specific serine of the apo-ACP-like protein.

It functions in the pathway antibiotic biosynthesis; granaticin biosynthesis. In terms of biological role, acyl carrier protein. The chain is Granaticin polyketide synthase acyl carrier protein from Streptomyces violaceoruber.